A 139-amino-acid chain; its full sequence is Nucleoside diphosphate kinase (139 aa).

ATP is bound by residues Lys10, Phe58, Arg86, Thr92, Arg103, and Asn113. His116 serves as the catalytic Pros-phosphohistidine intermediate.

The protein belongs to the NDK family. Homotetramer. Requires Mg(2+) as cofactor.

Its subcellular location is the cytoplasm. The enzyme catalyses a 2'-deoxyribonucleoside 5'-diphosphate + ATP = a 2'-deoxyribonucleoside 5'-triphosphate + ADP. The catalysed reaction is a ribonucleoside 5'-diphosphate + ATP = a ribonucleoside 5'-triphosphate + ADP. Its function is as follows. Major role in the synthesis of nucleoside triphosphates other than ATP. The ATP gamma phosphate is transferred to the NDP beta phosphate via a ping-pong mechanism, using a phosphorylated active-site intermediate. The protein is Nucleoside diphosphate kinase of Oleidesulfovibrio alaskensis (strain ATCC BAA-1058 / DSM 17464 / G20) (Desulfovibrio alaskensis).